Here is a 550-residue protein sequence, read N- to C-terminus: ATP synthase subunit alpha (550 aa).

172 to 179 contacts ATP; sequence GDRKTGKT. The segment at 521–550 is disordered; it reads EPAAEPLAGEEDRETVTRFHDDATDRPAGS. The span at 534–550 shows a compositional bias: basic and acidic residues; that stretch reads ETVTRFHDDATDRPAGS.

The protein belongs to the ATPase alpha/beta chains family. In terms of assembly, F-type ATPases have 2 components, CF(1) - the catalytic core - and CF(0) - the membrane proton channel. CF(1) has five subunits: alpha(3), beta(3), gamma(1), delta(1), epsilon(1). CF(0) has three main subunits: a(1), b(2) and c(9-12). The alpha and beta chains form an alternating ring which encloses part of the gamma chain. CF(1) is attached to CF(0) by a central stalk formed by the gamma and epsilon chains, while a peripheral stalk is formed by the delta and b chains.

It localises to the cell membrane. The catalysed reaction is ATP + H2O + 4 H(+)(in) = ADP + phosphate + 5 H(+)(out). Functionally, produces ATP from ADP in the presence of a proton gradient across the membrane. The alpha chain is a regulatory subunit. The sequence is that of ATP synthase subunit alpha from Salinispora tropica (strain ATCC BAA-916 / DSM 44818 / JCM 13857 / NBRC 105044 / CNB-440).